The primary structure comprises 24 residues: Lectin (24 aa).

Belongs to the leguminous lectin family. Homotetramer.

In terms of biological role, agglutinates erythrocytes of blood group A. Binds in decreasing order of affinity: N-acetyl-D-galactosamine, D-galactose, and D-galactosamine. The sequence is that of Lectin from Crotalaria pallida (Smooth rattlebox).